The sequence spans 1995 residues: uncharacterized protein (1995 aa).

7 helical membrane-spanning segments follow: residues 31–51 (NYTEFGAVFTYFIFSIGEFFK), 53–73 (FFSFSFLNNIWSIPIIIPDIA), 106–126 (LVIFEKFVIGIINSLFLILPT), 157–177 (FLWLASIILGWRFFVIPWLSL), 212–232 (IFLLNFLLALTEQSCIYPFIS), 254–274 (FLLIHGAYLLGILFGSFSLLQ), and 307–327 (ILNFTFLYATMLCAIASIPYY). 2 disordered regions span residues 1418–1441 (SLKKSQIKKRSRHSWKKRSRHQFS) and 1848–1883 (DLRWRPSSRTKQKRKDNTRSSAASKTKSNKRVKTNP). Composition is skewed to basic residues over residues 1422 to 1441 (SQIKKRSRHSWKKRSRHQFS) and 1853 to 1863 (PSSRTKQKRKD).

This sequence belongs to the ycf78 family.

The protein resides in the plastid. Its subcellular location is the chloroplast membrane. In terms of biological role, essential for cell growth. May be involved in binding chloroplast DNA to either the chloroplast envelope or the thylakoid membrane. This is an uncharacterized protein from Chlamydomonas reinhardtii (Chlamydomonas smithii).